Here is a 595-residue protein sequence, read N- to C-terminus: Actin-histidine N-methyltransferase (595 aa).

The tract at residues 1–22 is disordered; that stretch reads MGKKSRVKTQKSGTGATATVSP. Over residues 10–20 the composition is skewed to polar residues; sequence QKSGTGATATV. Residues arginine 75, 104–106, arginine 254, 275–279, and 325–327 contribute to the S-adenosyl-L-methionine site; these read EGF, DMCNH, and SGF. The 221-residue stretch at 94 to 314 folds into the SET domain; the sequence is EGFEMVNFKE…AGEQIYIFYG (221 aa). A Phosphoserine modification is found at serine 513. A disordered region spans residues 552–595; sequence LVNGENCIPNGTRSENEDLNQEENKRAVEDAKGSSSDSTDAVKK. The span at 573–583 shows a compositional bias: basic and acidic residues; it reads EENKRAVEDAK. Over residues 584 to 595 the composition is skewed to polar residues; it reads GSSSDSTDAVKK.

Belongs to the class V-like SAM-binding methyltransferase superfamily. SETD3 actin-histidine methyltransferase family. As to quaternary structure, interacts with MYOD1. Phosphorylated by GSK3B, which is required for recognition by the SCF(FBXW7) complex and subsequent degradation. Post-translationally, ubiquitinated by the SCF(FBXW7) complex following phosphorylation by GSK3B, leading to its degradation by the proteasome.

The protein resides in the cytoplasm. It localises to the nucleus. The enzyme catalyses L-histidyl-[protein] + S-adenosyl-L-methionine = N(tele)-methyl-L-histidyl-[protein] + S-adenosyl-L-homocysteine + H(+). Protein-histidine N-methyltransferase that specifically mediates 3-methylhistidine (tele-methylhistidine) methylation of actin at 'His-73'. Histidine methylation of actin is required for smooth muscle contraction of the laboring uterus during delivery. Does not have protein-lysine N-methyltransferase activity and probably only catalyzes histidine methylation of actin. The chain is Actin-histidine N-methyltransferase from Otolemur garnettii (Small-eared galago).